Here is a 293-residue protein sequence, read N- to C-terminus: Extracellular metalloprotease MGYG_00389 (293 aa).

Positions 1 to 19 (MRFSVFLPAIAALSSAVAA) are cleaved as a signal peptide. N49 and N53 each carry an N-linked (GlcNAc...) asparagine glycan. Residue H184 coordinates Zn(2+). Residue E185 is part of the active site. Residue H188 participates in Zn(2+) binding. Cysteines 223 and 249 form a disulfide. Residues 270–293 (GSGSGSVTRPRPKPPVLMDYEHRL) are disordered.

Belongs to the peptidase M43B family.

The protein resides in the secreted. Functionally, secreted metalloproteinase that allows assimilation of proteinaceous substrates. Plays a pivotal role as a pathogenicity determinant during infections and contributes to the ability of the pathogen to persist within the mammalian host. This is Extracellular metalloprotease MGYG_00389 from Arthroderma gypseum (strain ATCC MYA-4604 / CBS 118893) (Microsporum gypseum).